The primary structure comprises 91 residues: Acylphosphatase (91 aa).

The region spanning 4-91 is the Acylphosphatase-like domain; sequence RAMVTVKGMV…GEFDDFHIAY (88 aa). Active-site residues include Arg19 and Asn37.

The protein belongs to the acylphosphatase family.

It carries out the reaction an acyl phosphate + H2O = a carboxylate + phosphate + H(+). This is Acylphosphatase (acyP) from Geotalea uraniireducens (strain Rf4) (Geobacter uraniireducens).